The chain runs to 348 residues: tRNA (cytosine(34)-C(5))-methyltransferase, mitochondrial (348 aa).

S-adenosyl-L-methionine contacts are provided by residues 139–145, glutamate 162, aspartate 193, and aspartate 211; that span reads CAAPGGK. The Nucleophile role is filled by cysteine 265.

It belongs to the class I-like SAM-binding methyltransferase superfamily. RsmB/NOP family.

Its subcellular location is the mitochondrion matrix. The catalysed reaction is cytidine(34) in mitochondrial tRNA + S-adenosyl-L-methionine = 5-methylcytidine(34) in mitochondrial tRNA + S-adenosyl-L-homocysteine + H(+). Functionally, mitochondrial tRNA methyltransferase that mediates methylation of cytosine to 5-methylcytosine (m5C) at position 34 of mt-tRNA(Met). mt-tRNA(Met) methylation at cytosine(34) takes place at the wobble position of the anticodon and initiates the formation of 5-formylcytosine (f(5)c) at this position. mt-tRNA(Met) containing the f(5)c modification at the wobble position enables recognition of the AUA codon in addition to the AUG codon, expanding codon recognition in mitochondrial translation. The chain is tRNA (cytosine(34)-C(5))-methyltransferase, mitochondrial from Mus musculus (Mouse).